Consider the following 124-residue polypeptide: Small ribosomal subunit protein bS6 (124 aa).

The disordered stretch occupies residues 96-124 (ETGPSPMMKEVQREEAKKAAAAQPTEAQA). The segment covering 114 to 124 (AAAAQPTEAQA) has biased composition (low complexity).

The protein belongs to the bacterial ribosomal protein bS6 family.

Functionally, binds together with bS18 to 16S ribosomal RNA. The chain is Small ribosomal subunit protein bS6 from Burkholderia lata (strain ATCC 17760 / DSM 23089 / LMG 22485 / NCIMB 9086 / R18194 / 383).